The sequence spans 148 residues: UPF0260 protein KPN78578_22800 (148 aa).

This sequence belongs to the UPF0260 family.

The polypeptide is UPF0260 protein KPN78578_22800 (Klebsiella pneumoniae subsp. pneumoniae (strain ATCC 700721 / MGH 78578)).